We begin with the raw amino-acid sequence, 214 residues long: Small ribosomal subunit protein uS3c (214 aa).

The KH type-2 domain maps to 39 to 111 (IRTYLNKLAK…QLTINIIEVE (73 aa)).

Belongs to the universal ribosomal protein uS3 family. In terms of assembly, part of the 30S ribosomal subunit.

The protein resides in the plastid. Its subcellular location is the chloroplast. This chain is Small ribosomal subunit protein uS3c (rps3), found in Trieres chinensis (Marine centric diatom).